The sequence spans 312 residues: Deoxyribonuclease-1-like 1 (312 aa).

The first 35 residues, 1-35, serve as a signal peptide directing secretion; the sequence is MPSGQPVFPRRVPDAYIAMRGLVVASLLILLVGGT. The N-linked (GlcNAc...) asparagine glycan is linked to N102. E113 is a catalytic residue. N-linked (GlcNAc...) asparagine glycosylation occurs at N133. H164 is a catalytic residue. A disulfide bridge links C203 with C240. The N-linked (GlcNAc...) asparagine glycan is linked to N239.

Belongs to the DNase I family.

The protein resides in the endoplasmic reticulum. In Rattus norvegicus (Rat), this protein is Deoxyribonuclease-1-like 1 (Dnase1l1).